Consider the following 130-residue polypeptide: Small ribosomal subunit protein uS11 (130 aa).

This sequence belongs to the universal ribosomal protein uS11 family. Part of the 30S ribosomal subunit. Interacts with proteins S7 and S18. Binds to IF-3.

Functionally, located on the platform of the 30S subunit, it bridges several disparate RNA helices of the 16S rRNA. Forms part of the Shine-Dalgarno cleft in the 70S ribosome. The chain is Small ribosomal subunit protein uS11 from Rippkaea orientalis (strain PCC 8801 / RF-1) (Cyanothece sp. (strain PCC 8801)).